The primary structure comprises 786 residues: Myosin light chain kinase 3 (786 aa).

Ser155 carries the phosphoserine modification. Disordered stretches follow at residues 233–258 (EALD…SEDT), 279–315 (RMSQ…IHSD), and 333–443 (ELFE…GRRV). Polar residues predominate over residues 279-293 (RMSQSAGEGTSSSKP). Phosphoserine is present on residues Ser341 and Ser422. The Protein kinase domain maps to 482–737 (VSQHEVLGGG…ATQCLKHEWL (256 aa)). ATP-binding positions include 488–496 (LGGGRFGQV) and Lys511. Residue Asp603 is the Proton acceptor of the active site.

The protein belongs to the protein kinase superfamily. CAMK Ser/Thr protein kinase family. Mg(2+) is required as a cofactor. Phosphorylated on serine residues. Expressed in cardiomyocytes (at protein level). Up-regulated in heart after experimental myocardial infarction at the mRNA level.

Its subcellular location is the cytoplasm. The enzyme catalyses L-seryl-[myosin light chain] + ATP = O-phospho-L-seryl-[myosin light chain] + ADP + H(+). It carries out the reaction L-threonyl-[myosin light chain] + ATP = O-phospho-L-threonyl-[myosin light chain] + ADP + H(+). Its function is as follows. Calmodulin-dependent kinase that phosphorylates MYL2 in vitro. Promotes sarcomere formation in cardiomyocytes. Increases cardiomyocyte contractility. The protein is Myosin light chain kinase 3 (Mylk3) of Rattus norvegicus (Rat).